The chain runs to 137 residues: Large ribosomal subunit protein uL16 (137 aa).

Belongs to the universal ribosomal protein uL16 family. In terms of assembly, part of the 50S ribosomal subunit.

Functionally, binds 23S rRNA and is also seen to make contacts with the A and possibly P site tRNAs. This is Large ribosomal subunit protein uL16 from Xylella fastidiosa (strain M23).